Consider the following 310-residue polypeptide: Quinolinate synthase (310 aa).

Residues histidine 27 and serine 44 each contribute to the iminosuccinate site. Position 89 (cysteine 89) interacts with [4Fe-4S] cluster. Iminosuccinate-binding positions include 115-117 and serine 132; that span reads YVN. Cysteine 175 contributes to the [4Fe-4S] cluster binding site. Residues 201–203 and threonine 222 contribute to the iminosuccinate site; that span reads HPE. Residue cysteine 267 coordinates [4Fe-4S] cluster.

The protein belongs to the quinolinate synthase family. Type 2 subfamily. Requires [4Fe-4S] cluster as cofactor.

The protein localises to the cytoplasm. It carries out the reaction iminosuccinate + dihydroxyacetone phosphate = quinolinate + phosphate + 2 H2O + H(+). It participates in cofactor biosynthesis; NAD(+) biosynthesis; quinolinate from iminoaspartate: step 1/1. Functionally, catalyzes the condensation of iminoaspartate with dihydroxyacetone phosphate to form quinolinate. The chain is Quinolinate synthase from Thermus thermophilus (strain ATCC 27634 / DSM 579 / HB8).